Consider the following 88-residue polypeptide: UPF0250 protein Shewmr4_0986 (88 aa).

It belongs to the UPF0250 family.

The sequence is that of UPF0250 protein Shewmr4_0986 from Shewanella sp. (strain MR-4).